The chain runs to 108 residues: UPF0060 membrane protein Rsph17029_0436 (108 aa).

The next 4 helical transmembrane spans lie at 5–25, 32–52, 62–82, and 86–106; these read LAAY…VWAW, ALWL…LALT, AVYG…VEGV, and RWDM…LWAP.

This sequence belongs to the UPF0060 family.

It is found in the cell inner membrane. The protein is UPF0060 membrane protein Rsph17029_0436 of Cereibacter sphaeroides (strain ATCC 17029 / ATH 2.4.9) (Rhodobacter sphaeroides).